The sequence spans 466 residues: Ribulose bisphosphate carboxylase large chain (466 aa).

Lysine 5 bears the N6,N6,N6-trimethyllysine mark. Residues asparagine 114 and threonine 164 each contribute to the substrate site. Lysine 166 functions as the Proton acceptor in the catalytic mechanism. Position 168 (lysine 168) interacts with substrate. Residues lysine 192, aspartate 194, and glutamate 195 each contribute to the Mg(2+) site. The residue at position 192 (lysine 192) is an N6-carboxylysine. Histidine 285 (proton acceptor) is an active-site residue. 3 residues coordinate substrate: arginine 286, histidine 318, and serine 370.

It belongs to the RuBisCO large chain family. Type I subfamily. In terms of assembly, heterohexadecamer of 8 large chains and 8 small chains; disulfide-linked. The disulfide link is formed within the large subunit homodimers. Requires Mg(2+) as cofactor. In terms of processing, the disulfide bond which can form in the large chain dimeric partners within the hexadecamer appears to be associated with oxidative stress and protein turnover.

It is found in the plastid. It localises to the chloroplast. It catalyses the reaction 2 (2R)-3-phosphoglycerate + 2 H(+) = D-ribulose 1,5-bisphosphate + CO2 + H2O. It carries out the reaction D-ribulose 1,5-bisphosphate + O2 = 2-phosphoglycolate + (2R)-3-phosphoglycerate + 2 H(+). Its function is as follows. RuBisCO catalyzes two reactions: the carboxylation of D-ribulose 1,5-bisphosphate, the primary event in carbon dioxide fixation, as well as the oxidative fragmentation of the pentose substrate in the photorespiration process. Both reactions occur simultaneously and in competition at the same active site. In Drosera capensis (Cape sundew), this protein is Ribulose bisphosphate carboxylase large chain.